A 204-amino-acid chain; its full sequence is dITP/XTP pyrophosphatase (204 aa).

8–13 (SNNAHK) provides a ligand contact to substrate. 2 residues coordinate Mg(2+): Glu-41 and Asp-76. Residue Asp-76 is the Proton acceptor of the active site. Residues Ser-77, 159–162 (FGYD), Lys-182, and 187–188 (HR) each bind substrate.

Belongs to the HAM1 NTPase family. In terms of assembly, homodimer. It depends on Mg(2+) as a cofactor.

The catalysed reaction is XTP + H2O = XMP + diphosphate + H(+). It catalyses the reaction dITP + H2O = dIMP + diphosphate + H(+). It carries out the reaction ITP + H2O = IMP + diphosphate + H(+). Functionally, pyrophosphatase that catalyzes the hydrolysis of nucleoside triphosphates to their monophosphate derivatives, with a high preference for the non-canonical purine nucleotides XTP (xanthosine triphosphate), dITP (deoxyinosine triphosphate) and ITP. Seems to function as a house-cleaning enzyme that removes non-canonical purine nucleotides from the nucleotide pool, thus preventing their incorporation into DNA/RNA and avoiding chromosomal lesions. This is dITP/XTP pyrophosphatase from Clostridium perfringens (strain 13 / Type A).